A 268-amino-acid polypeptide reads, in one-letter code: Small ribosomal subunit protein eS1 (268 aa).

Positions 1 to 21 (MAVGKNKGLSKGGKKGGKKKV) are disordered.

Belongs to the eukaryotic ribosomal protein eS1 family. Component of the small ribosomal subunit. Mature ribosomes consist of a small (40S) and a large (60S) subunit. The 40S subunit contains about 33 different proteins and 1 molecule of RNA (18S). The 60S subunit contains about 49 different proteins and 3 molecules of RNA (28S, 5.8S and 5S).

Its subcellular location is the cytoplasm. Functionally, essential for oogenesis; required for late follicle cell development. In Drosophila willistoni (Fruit fly), this protein is Small ribosomal subunit protein eS1.